The sequence spans 180 residues: MLKLLSEIGPVIAFFAGFFYGGGIQNATLYMLITSVICITLCYIIDKKVSKLSIISTTVLLVSGSITLISGDSMYIKIKPTILYVIFGIIFLMSGIRKTPFIKYALESIVRLKEESWITLSYRTAAFFFFMAVVNEIVWRNFSDETWVKFKVFGIIPITFIFIVLQLPLLLKNKLPDSKI.

5 consecutive transmembrane segments (helical) span residues 25–45 (QNAT…CYII), 49–69 (VSKL…ITLI), 76–96 (IKIK…MSGI), 118–138 (ITLS…NEIV), and 150–170 (FKVF…LPLL).

The protein belongs to the YciB family.

The protein resides in the cell inner membrane. Plays a role in cell envelope biogenesis, maintenance of cell envelope integrity and membrane homeostasis. In Rickettsia akari (strain Hartford), this protein is Inner membrane-spanning protein YciB.